The primary structure comprises 181 residues: Resolvase/recombinase (181 aa).

In terms of domain architecture, Resolvase/invertase-type recombinase catalytic spans 2–137; it reads RLFGYARVST…EGRLEAKAKG (136 aa). The O-(5'-phospho-DNA)-serine intermediate role is filled by serine 10. The H-T-H motif DNA-binding region spans 161-180; sequence AMEIAKRLKIGRSTVYKVLA.

This sequence belongs to the site-specific recombinase resolvase family.

In terms of biological role, site-specific recombination protein. The protein is Resolvase/recombinase of Pseudomonas putida (Arthrobacter siderocapsulatus).